The sequence spans 402 residues: Multidrug resistance protein MdtH (402 aa).

Residues 1–12 (MSRVSQARNLGK) are Cytoplasmic-facing. A helical transmembrane segment spans residues 13 to 33 (YFLLIDNMLVVLGFFVVFPLI). Residues 34–98 (SIRFVDQMGW…GFATMGIAHE (65 aa)) are Periplasmic-facing. Residues 99 to 116 (PWLLWFSCLLSGLGGTLF) form a helical membrane-spanning segment. Over 117 to 138 (DPPRSALVVKLIRPQQRGRFFS) the chain is Cytoplasmic. Residues 139 to 159 (LLMMQDSASAVIGALLGSWLL) form a helical membrane-spanning segment. Residues 160–164 (QYDFR) are Periplasmic-facing. A helical transmembrane segment spans residues 165-185 (LVCATGAVLFVLCAAFNAWLL). At 186 to 213 (PAWKLSTVRTPVREGMTRVMRDKRFVTY) the chain is on the cytoplasmic side. Residues 214 to 234 (VLTLAGYYMLAVQVMLMLPIM) form a helical membrane-spanning segment. Residues 235-243 (VNDVAGAPS) are Periplasmic-facing. The chain crosses the membrane as a helical span at residues 244-264 (AVKWMYAIEACLSLTLLYPIA). At 265–276 (RWSEKHFRLEHR) the chain is on the cytoplasmic side. Residues 277 to 297 (LMAGLLIMSLSMMPVGMVSGL) form a helical membrane-spanning segment. The Periplasmic portion of the chain corresponds to 298–299 (QQ). Residues 300–320 (LFTLICLFYIGSIIAEPARET) traverse the membrane as a helical segment. Topologically, residues 321 to 339 (LSASLADARARGSYMGFSR) are cytoplasmic. Residues 340 to 360 (LGLAIGGAIGYIGGGWLFDLG) traverse the membrane as a helical segment. The Periplasmic segment spans residues 361–367 (KSAHQPE). The helical transmembrane segment at 368-388 (LPWMMLGIIGIFTFLALGWQF) threads the bilayer. At 389 to 402 (SQKRAARRLLERDA) the chain is on the cytoplasmic side.

Belongs to the major facilitator superfamily. DHA1 family. MdtH (TC 2.A.1.2.21) subfamily.

The protein resides in the cell inner membrane. In Shigella flexneri, this protein is Multidrug resistance protein MdtH.